Reading from the N-terminus, the 521-residue chain is NAD(P)H-quinone oxidoreductase subunit 2 (521 aa).

The next 14 helical transmembrane spans lie at 15 to 35 (ILPE…DITF), 42 to 62 (WTPY…YTQW), 79 to 99 (LSIV…LMSV), 109 to 126 (IGEF…AMFL), 131 to 153 (ELVM…TGYM), 167 to 187 (LLIG…LYGL), 208 to 228 (LALV…IAAV), 242 to 262 (PTPV…ALAI), 276 to 296 (WQFI…VVAI), 304 to 324 (MLAY…VIGT), 332 to 352 (VFYL…VILF), 376 to 396 (LALS…GFFG), 398 to 418 (LYLF…LGLI), and 464 to 484 (VGLV…NPLL).

Belongs to the complex I subunit 2 family. NDH-1 can be composed of about 15 different subunits; different subcomplexes with different compositions have been identified which probably have different functions.

It localises to the cellular thylakoid membrane. The catalysed reaction is a plastoquinone + NADH + (n+1) H(+)(in) = a plastoquinol + NAD(+) + n H(+)(out). The enzyme catalyses a plastoquinone + NADPH + (n+1) H(+)(in) = a plastoquinol + NADP(+) + n H(+)(out). Functionally, NDH-1 shuttles electrons from an unknown electron donor, via FMN and iron-sulfur (Fe-S) centers, to quinones in the respiratory and/or the photosynthetic chain. The immediate electron acceptor for the enzyme in this species is believed to be plastoquinone. Couples the redox reaction to proton translocation, and thus conserves the redox energy in a proton gradient. Cyanobacterial NDH-1 also plays a role in inorganic carbon-concentration. The chain is NAD(P)H-quinone oxidoreductase subunit 2 from Acaryochloris marina (strain MBIC 11017).